We begin with the raw amino-acid sequence, 179 residues long: MLYLRDHQPVAVLFDDNFEKIQGVVDRNGYVFKNVTPQQITTIEFLLNKKLLKVRGFKNIIIRWAALYLLICDSQTKIYEVILEKGHDITFGTEAGYVFFGEYINMDQLRKRFFYMDHLHNLWREGNLFSEVHVNLTKSAHCYIDLTENKTPILSMLDDVSSFRIKDDNYRWPSQLKDE.

Its subcellular location is the plastid. The protein localises to the cyanelle. This is an uncharacterized protein from Cyanophora paradoxa.